The chain runs to 360 residues: Chorismate synthase (360 aa).

Residue Arg-47 coordinates NADP(+). Residues 124–126, 240–241, Gly-285, 300–304, and Arg-326 contribute to the FMN site; these read RSS, NA, and KPVAT.

The protein belongs to the chorismate synthase family. In terms of assembly, homotetramer. FMNH2 serves as cofactor.

It catalyses the reaction 5-O-(1-carboxyvinyl)-3-phosphoshikimate = chorismate + phosphate. It functions in the pathway metabolic intermediate biosynthesis; chorismate biosynthesis; chorismate from D-erythrose 4-phosphate and phosphoenolpyruvate: step 7/7. Its function is as follows. Catalyzes the anti-1,4-elimination of the C-3 phosphate and the C-6 proR hydrogen from 5-enolpyruvylshikimate-3-phosphate (EPSP) to yield chorismate, which is the branch point compound that serves as the starting substrate for the three terminal pathways of aromatic amino acid biosynthesis. This reaction introduces a second double bond into the aromatic ring system. The chain is Chorismate synthase from Cytophaga hutchinsonii (strain ATCC 33406 / DSM 1761 / CIP 103989 / NBRC 15051 / NCIMB 9469 / D465).